The sequence spans 238 residues: Ribonuclease PH (238 aa).

Phosphate is bound by residues Arg86 and 124–126 (GTR).

It belongs to the RNase PH family. As to quaternary structure, homohexameric ring arranged as a trimer of dimers.

The enzyme catalyses tRNA(n+1) + phosphate = tRNA(n) + a ribonucleoside 5'-diphosphate. Functionally, phosphorolytic 3'-5' exoribonuclease that plays an important role in tRNA 3'-end maturation. Removes nucleotide residues following the 3'-CCA terminus of tRNAs; can also add nucleotides to the ends of RNA molecules by using nucleoside diphosphates as substrates, but this may not be physiologically important. Probably plays a role in initiation of 16S rRNA degradation (leading to ribosome degradation) during starvation. In Actinobacillus pleuropneumoniae serotype 7 (strain AP76), this protein is Ribonuclease PH.